A 128-amino-acid polypeptide reads, in one-letter code: Large ribosomal subunit protein bL12 (128 aa).

Belongs to the bacterial ribosomal protein bL12 family. As to quaternary structure, homodimer. Part of the ribosomal stalk of the 50S ribosomal subunit. Forms a multimeric L10(L12)X complex, where L10 forms an elongated spine to which 2 to 4 L12 dimers bind in a sequential fashion. Binds GTP-bound translation factors.

Forms part of the ribosomal stalk which helps the ribosome interact with GTP-bound translation factors. Is thus essential for accurate translation. This is Large ribosomal subunit protein bL12 from Corynebacterium kroppenstedtii (strain DSM 44385 / JCM 11950 / CIP 105744 / CCUG 35717).